We begin with the raw amino-acid sequence, 240 residues long: Tetrahydromethanopterin S-methyltransferase subunit A (240 aa).

Topologically, residues 1-218 are cytoplasmic; it reads MADKREPAPG…KFHSGVHAGK (218 aa). His85 provides a ligand contact to 5-hydroxybenzimidazolylcob(I)amide. Residues 219-239 form a helical membrane-spanning segment; sequence VEGAMIGLTITISLLGLLLLG. Position 240 (Arg240) is a topological domain, extracellular.

The protein belongs to the MtrA family. As to quaternary structure, the complex is composed of 8 subunits; MtrA, MtrB, MtrC, MtrD, MtrE, MtrF, MtrG and MtrH. It depends on 5-hydroxybenzimidazolylcob(I)amide as a cofactor.

The protein resides in the cell membrane. The enzyme catalyses 5-methyl-5,6,7,8-tetrahydromethanopterin + coenzyme M + 2 Na(+)(in) = 5,6,7,8-tetrahydromethanopterin + methyl-coenzyme M + 2 Na(+)(out). Its pathway is one-carbon metabolism; methanogenesis from CO(2); methyl-coenzyme M from 5,10-methylene-5,6,7,8-tetrahydromethanopterin: step 2/2. Its function is as follows. Part of a complex that catalyzes the formation of methyl-coenzyme M and tetrahydromethanopterin from coenzyme M and methyl-tetrahydromethanopterin. This is an energy-conserving, sodium-ion translocating step. The protein is Tetrahydromethanopterin S-methyltransferase subunit A of Methanosarcina mazei (strain ATCC BAA-159 / DSM 3647 / Goe1 / Go1 / JCM 11833 / OCM 88) (Methanosarcina frisia).